The sequence spans 291 residues: 3-hydroxy-5-phosphonooxypentane-2,4-dione thiolase (291 aa).

The active-site Schiff-base intermediate with substrate is the Lys203.

The protein belongs to the DeoC/FbaB aldolase family. Homodecamer.

It localises to the cytoplasm. The catalysed reaction is dihydroxyacetone phosphate + acetyl-CoA = 3-hydroxy-2,4-dioxopentyl phosphate + CoA. Functionally, involved in the degradation of phospho-AI-2, thereby terminating induction of the lsr operon and closing the AI-2 signaling cycle. Catalyzes the transfer of an acetyl moiety from 3-hydroxy-5-phosphonooxypentane-2,4-dione to CoA to form glycerone phosphate and acetyl-CoA. The protein is 3-hydroxy-5-phosphonooxypentane-2,4-dione thiolase of Escherichia coli (strain K12 / DH10B).